The chain runs to 404 residues: Tryptophan synthase beta chain (404 aa).

Position 95 is an N6-(pyridoxal phosphate)lysine (K95).

Belongs to the TrpB family. As to quaternary structure, tetramer of two alpha and two beta chains. It depends on pyridoxal 5'-phosphate as a cofactor.

It carries out the reaction (1S,2R)-1-C-(indol-3-yl)glycerol 3-phosphate + L-serine = D-glyceraldehyde 3-phosphate + L-tryptophan + H2O. Its pathway is amino-acid biosynthesis; L-tryptophan biosynthesis; L-tryptophan from chorismate: step 5/5. In terms of biological role, the beta subunit is responsible for the synthesis of L-tryptophan from indole and L-serine. The protein is Tryptophan synthase beta chain (trpB) of Thermus thermophilus (strain ATCC BAA-163 / DSM 7039 / HB27).